A 570-amino-acid polypeptide reads, in one-letter code: Small ribosomal subunit protein uS2c (570 aa).

The segment at 1 to 306 is N-terminal extension; the sequence is MLNKKPPYLI…IKLNPLSTPQ (306 aa). TRAM domains lie at 28–89 and 104–169; these read KLIP…KLIK and ALTP…VATV.

Belongs to the universal ribosomal protein uS2 family.

Its subcellular location is the plastid. The protein resides in the chloroplast. This is Small ribosomal subunit protein uS2c (rps2-1) from Chlamydomonas reinhardtii (Chlamydomonas smithii).